The sequence spans 131 residues: Cyclin-dependent kinase 4 inhibitor B (131 aa).

4 ANK repeats span residues 6 to 35 (GGDADLANAAARGQVEAVRQLLEAGVDPNR), 39 to 67 (FGRRPIQVMMMGSARVAELLLLHGADPNC), 72 to 101 (TLTRPVHDAAREGFLDTLVALHRAGGRLDV), and 105 to 131 (WGRLPVDLAEERGHRDVARYLRATAGD).

The protein belongs to the CDKN2 cyclin-dependent kinase inhibitor family. In terms of assembly, heterodimer of CDKN2B with CDK4 or CDK6.

Interacts strongly with CDK4 and CDK6. Potent inhibitor. Potential effector of TGF-beta induced cell cycle arrest. The protein is Cyclin-dependent kinase 4 inhibitor B (CDKN2B) of Bos taurus (Bovine).